Reading from the N-terminus, the 826-residue chain is Villin-1 (826 aa).

Residues 1–734 are core; the sequence is MVELSKKVTG…YDELKAELGD (734 aa). One copy of the Gelsolin-like 1 repeat lies at 27-76; it reads MEMVPVPTKSYGNFYEGDCYVLLSTRKTGSGFSYNIHYWLGKNSSQDEQG. 112–119 lines the a 1,2-diacyl-sn-glycero-3-phospho-(1D-myo-inositol-4,5-bisphosphate) pocket; sequence KQGLIYKQ. Residues 129–137 are crucial for binding an actin filament; that stretch reads VETNTYNVQ. 138–146 serves as a coordination point for a 1,2-diacyl-sn-glycero-3-phospho-(1D-myo-inositol-4,5-bisphosphate); that stretch reads RLLHVKGKK. Gelsolin-like repeat units lie at residues 148–188, 265–309, 408–457, 528–568, and 631–672; these read VVAA…AERL, LVIQ…EEKQ, QELV…DELA, TKAF…DERE, and FLAT…SEKE. The interval 735 to 826 is headpiece; it reads NASIGQLVSG…QNLKKEKGLF (92 aa). One can recognise an HP domain in the interval 760-826; the sequence is PTKLETFPLD…QNLKKEKGLF (67 aa). The tract at residues 820-823 is absolutely required for activity; that stretch reads KKEK.

The protein belongs to the villin/gelsolin family. In terms of assembly, monomer. Homodimer. Associates with F-actin; the association with F-actin is inhibited by tropomyosin. Post-translationally, phosphorylated on tyrosine residues. The unphosphorylated form increases the initial rate of actin-nucleating activity, whereas the tyrosine-phosphorylated form inhibits actin-nucleating activity, enhances actin-bundling activity and enhances actin-severing activity by reducing high Ca(2+) requirements. The tyrosine-phosphorylated form does not regulate actin-capping activity. Tyrosine phosphorylation is essential for cell migration: tyrosine phosphorylation sites in the N-terminus half regulate actin reorganization and cell morphology, whereas tyrosine phosphorylation sites in the C-terminus half regulate cell migration. Tyrosine phosphorylation is induced by epidermal growth factor (EGF) and stimulates cell migration. As to expression, specifically expressed in epithelial cells. Component of brush border microvilli.

The protein resides in the cytoplasm. It is found in the cytoskeleton. Its subcellular location is the cell projection. The protein localises to the microvillus. It localises to the lamellipodium. The protein resides in the ruffle. It is found in the filopodium tip. Its subcellular location is the filopodium. Its function is as follows. Epithelial cell-specific Ca(2+)-regulated actin-modifying protein that modulates the reorganization of microvillar actin filaments. Plays a role in the actin nucleation, actin filament bundle assembly, actin filament capping and severing. Binds phosphatidylinositol 4,5-bisphosphate (PIP2) and lysophosphatidic acid (LPA); binds LPA with higher affinity than PIP2. Binding to LPA increases its phosphorylation by SRC and inhibits all actin-modifying activities. Binding to PIP2 inhibits actin-capping and -severing activities but enhances actin-bundling activity. Regulates the intestinal epithelial cell morphology, cell invasion, cell migration and apoptosis. Protects against apoptosis induced by dextran sodium sulfate (DSS) in the gastrointestinal epithelium. Appears to regulate cell death by maintaining mitochondrial integrity. Enhances hepatocyte growth factor (HGF)-induced epithelial cell motility, chemotaxis and wound repair. Its actin-bundling activity is inhibited by tropomyosin. This is Villin-1 (VIL1) from Gallus gallus (Chicken).